Reading from the N-terminus, the 529-residue chain is MSMKQTSVFLLIQLICYFRPGACGKVLVWPTEYSHWINIKIILNELAQRGHEVTVLVSSASILIEPTKESSINFEIYSVPLSKSDLEYSFAKWIDEWTRDFETLSIWTYYSKMQKVFNEYSDVVENLCKALIWNKSLMKKLQGSQFDVILADAVGPCGELLAELLKTPLVYSLRFCPGYRCEKFSGGLPLPPSYVPVVLSELSDRMTFVERVKNMLQMLYFDFWFQPFKEKSWSQFYSDVLGRPTTLTEMMGKADIWLIRTFWDLEFPHPFLPNFDFVGGLHCKPAKPLPREMEEFVQSSGEHGVVVFSLGSMVKNLTEEKANVVASALAQIPQKVVWRFDGKKPDTLGSNTRLYKWIPQNDLLGHPKTKAFVAHGGTNGIYEAIYHGIPIVGIPLFADQPDNINHMVAKGAAVRVDFSILSTTGLLTALKIVMNDPSYKENAMRLSRIHHDQPVKPLDRAVFWIEYVMRHKGAKHLRSTLHDLSWFQYHSLDVIGFLLLCVVGVVFIITKFCLFCCRKTANMGKKKKE.

The signal sequence occupies residues M1 to C23. 2 N-linked (GlcNAc...) asparagine glycosylation sites follow: N134 and N316. The chain crosses the membrane as a helical span at residues V494–T510.

The protein belongs to the UDP-glycosyltransferase family.

Its subcellular location is the endoplasmic reticulum membrane. It carries out the reaction glucuronate acceptor + UDP-alpha-D-glucuronate = acceptor beta-D-glucuronoside + UDP + H(+). The enzyme catalyses 17beta-estradiol + UDP-alpha-D-glucuronate = 17beta-estradiol 17-O-(beta-D-glucuronate) + UDP + H(+). Functionally, UDP-glucuronosyltransferase (UGT) that catalyzes phase II biotransformation reactions in which lipophilic substrates are conjugated with glucuronic acid to increase the metabolite's water solubility, thereby facilitating excretion into either the urine or bile. Essential for the elimination and detoxification of drugs, xenobiotics and endogenous compounds. Catalyzes the glucuronidation of the endogenous estrogen hormone estradiol. The sequence is that of UDP-glucuronosyltransferase 2B1 from Rattus norvegicus (Rat).